The following is an 89-amino-acid chain: Small ribosomal subunit protein uS15 (89 aa).

Belongs to the universal ribosomal protein uS15 family. In terms of assembly, part of the 30S ribosomal subunit. Forms a bridge to the 50S subunit in the 70S ribosome, contacting the 23S rRNA.

Its function is as follows. One of the primary rRNA binding proteins, it binds directly to 16S rRNA where it helps nucleate assembly of the platform of the 30S subunit by binding and bridging several RNA helices of the 16S rRNA. Forms an intersubunit bridge (bridge B4) with the 23S rRNA of the 50S subunit in the ribosome. The protein is Small ribosomal subunit protein uS15 of Ruegeria sp. (strain TM1040) (Silicibacter sp.).